Reading from the N-terminus, the 1058-residue chain is Translation initiation factor IF-2 (1058 aa).

Positions 1 to 12 (MNDTKTPGDKTL) are enriched in basic and acidic residues. A disordered region spans residues 1-468 (MNDTKTPGDK…MTGHRGMQES (468 aa)). The segment covering 54–81 (APGEAGAPSGTPAAAPAATPAPAAAAPR) has biased composition (low complexity). Residues 82-95 (PATPAPAAPRPAAP) show a composition bias toward pro residues. Residues 96 to 108 (ATPAQPAAEAKAP) show a composition bias toward low complexity. Positions 109-119 (APAPTPAPAAP) are enriched in pro residues. Composition is skewed to low complexity over residues 120-156 (AAPVAEAPKVEAPAPVAAKPEAAPAAPVAEAPKVEVP) and 164-228 (EPVA…QRPG). Over residues 244-271 (RSGGPGSDRRGGPGGQNRPGQNRQGGSG) the composition is skewed to gly residues. The span at 292 to 364 (ARVREVEERR…ARKRFGEETG (73 aa)) shows a compositional bias: basic and acidic residues. A compositionally biased stretch (low complexity) spans 368–396 (GASAPSTSTARPLTPRPAGTTTTTGAPAA). The segment covering 452 to 461 (FRRRTQRMTG) has biased composition (basic residues). The tr-type G domain occupies 555-725 (PRPPVVTIMG…SLQSEVLDLK (171 aa)). The segment at 564 to 571 (GHVDHGKT) is G1. 564-571 (GHVDHGKT) contributes to the GTP binding site. Positions 589-593 (GITQH) are G2. The tract at residues 611–614 (DTPG) is G3. Residues 611-615 (DTPGH) and 665-668 (NKID) each bind GTP. Residues 665-668 (NKID) are G4. Residues 701–703 (SAT) form a G5 region.

Belongs to the TRAFAC class translation factor GTPase superfamily. Classic translation factor GTPase family. IF-2 subfamily.

Its subcellular location is the cytoplasm. One of the essential components for the initiation of protein synthesis. Protects formylmethionyl-tRNA from spontaneous hydrolysis and promotes its binding to the 30S ribosomal subunits. Also involved in the hydrolysis of GTP during the formation of the 70S ribosomal complex. This is Translation initiation factor IF-2 from Azorhizobium caulinodans (strain ATCC 43989 / DSM 5975 / JCM 20966 / LMG 6465 / NBRC 14845 / NCIMB 13405 / ORS 571).